The chain runs to 297 residues: Universal stress protein MT2698 (297 aa).

ATP contacts are provided by residues Gly-13, Ala-43, 117-123 (GCLGSGR), Arg-127, 131-132 (SV), Gly-165, Asp-198, 262-268 (GSRGRGG), and 276-278 (SVG).

This sequence belongs to the universal stress protein A family. In terms of assembly, homodimer.

Functionally, may play a role in the establishment of a persistent infection (latency) in the host. The sequence is that of Universal stress protein MT2698 from Mycobacterium tuberculosis (strain CDC 1551 / Oshkosh).